The primary structure comprises 483 residues: Regulatory protein ViaA (483 aa).

The protein belongs to the ViaA family. Homodimer. Interacts with RavA.

The protein localises to the cytoplasm. In terms of biological role, component of the RavA-ViaA chaperone complex, which may act on the membrane to optimize the function of some of the respiratory chains. ViaA stimulates the ATPase activity of RavA. This is Regulatory protein ViaA from Escherichia fergusonii (strain ATCC 35469 / DSM 13698 / CCUG 18766 / IAM 14443 / JCM 21226 / LMG 7866 / NBRC 102419 / NCTC 12128 / CDC 0568-73).